The primary structure comprises 378 residues: D-alanine--D-alanine ligase (378 aa).

The ATP-grasp domain maps to K149–E374. E189–E247 serves as a coordination point for ATP. Mg(2+) is bound by residues D328, E341, and N343.

It belongs to the D-alanine--D-alanine ligase family. Requires Mg(2+) as cofactor. It depends on Mn(2+) as a cofactor.

It localises to the cytoplasm. It catalyses the reaction 2 D-alanine + ATP = D-alanyl-D-alanine + ADP + phosphate + H(+). Its pathway is cell wall biogenesis; peptidoglycan biosynthesis. Its function is as follows. Cell wall formation. This chain is D-alanine--D-alanine ligase, found in Bifidobacterium adolescentis (strain ATCC 15703 / DSM 20083 / NCTC 11814 / E194a).